A 134-amino-acid polypeptide reads, in one-letter code: T-cell receptor beta chain V region CTL-F3 (134 aa).

The N-terminal stretch at 1 to 19 is a signal peptide; sequence MAPRLLFCLVLCFLRAEPT. Positions 20 to 115 are v segment; the sequence is NAGVIQTPRH…SAVYLCASSL (96 aa). Cys42 and Cys111 are joined by a disulfide. The N-linked (GlcNAc...) asparagine glycan is linked to Asn90. The d segment stretch occupies residues 116–119; sequence STGV. The interval 120–134 is j segment; the sequence is SYEQYFGPGTRLTVL.

In Mus musculus (Mouse), this protein is T-cell receptor beta chain V region CTL-F3.